Here is an 840-residue protein sequence, read N- to C-terminus: Microcephalin (840 aa).

In terms of domain architecture, BRCT 1 spans 1 to 93 (MAAHILKDVV…AHIDESLFPA (93 aa)). The tract at residues 184 to 206 (KEKRENLSPSSSQMIQQSHDNPS) is disordered. Polar residues predominate over residues 190 to 206 (LSPSSSQMIQQSHDNPS). Ser-279, Ser-287, Ser-296, and Ser-333 each carry phosphoserine. Disordered stretches follow at residues 313–379 (PDQK…SIRR) and 418–437 (PDNL…QLPS). Residue Thr-335 is modified to Phosphothreonine. Residues 355 to 378 (KRQRVSHGSHSPSKGKSKRKRSIR) are compositionally biased toward basic residues. Positions 427–437 (ENLPPTSQLPS) are enriched in polar residues. Ser-552 bears the Phosphoserine mark. A disordered region spans residues 562–586 (LKSTQNKGTTSKISNSSEGEAQSEH). A compositionally biased stretch (polar residues) spans 563-581 (KSTQNKGTTSKISNSSEGE). BRCT domains lie at 644 to 734 (SGRG…PFEL) and 755 to 837 (YRGT…NYLL).

Interacts with CDC27 and maybe other components of the APC/C complex. Interacts with histone variant H2AX under DNA damage conditions.

It localises to the cytoplasm. Its subcellular location is the cytoskeleton. It is found in the microtubule organizing center. The protein resides in the centrosome. Functionally, implicated in chromosome condensation and DNA damage induced cellular responses. May play a role in neurogenesis and regulation of the size of the cerebral cortex. In Hylobates lar (Lar gibbon), this protein is Microcephalin.